A 283-amino-acid polypeptide reads, in one-letter code: Phosphatidylserine decarboxylase proenzyme (283 aa).

Active-site charge relay system; for autoendoproteolytic cleavage activity residues include D90, H143, and S248. The active-site Schiff-base intermediate with substrate; via pyruvic acid; for decarboxylase activity is S248. S248 carries the post-translational modification Pyruvic acid (Ser); by autocatalysis.

It belongs to the phosphatidylserine decarboxylase family. PSD-B subfamily. Prokaryotic type I sub-subfamily. In terms of assembly, heterodimer of a large membrane-associated beta subunit and a small pyruvoyl-containing alpha subunit. The cofactor is pyruvate. Is synthesized initially as an inactive proenzyme. Formation of the active enzyme involves a self-maturation process in which the active site pyruvoyl group is generated from an internal serine residue via an autocatalytic post-translational modification. Two non-identical subunits are generated from the proenzyme in this reaction, and the pyruvate is formed at the N-terminus of the alpha chain, which is derived from the carboxyl end of the proenzyme. The autoendoproteolytic cleavage occurs by a canonical serine protease mechanism, in which the side chain hydroxyl group of the serine supplies its oxygen atom to form the C-terminus of the beta chain, while the remainder of the serine residue undergoes an oxidative deamination to produce ammonia and the pyruvoyl prosthetic group on the alpha chain. During this reaction, the Ser that is part of the protease active site of the proenzyme becomes the pyruvoyl prosthetic group, which constitutes an essential element of the active site of the mature decarboxylase.

It is found in the cell membrane. The enzyme catalyses a 1,2-diacyl-sn-glycero-3-phospho-L-serine + H(+) = a 1,2-diacyl-sn-glycero-3-phosphoethanolamine + CO2. The protein operates within phospholipid metabolism; phosphatidylethanolamine biosynthesis; phosphatidylethanolamine from CDP-diacylglycerol: step 2/2. Functionally, catalyzes the formation of phosphatidylethanolamine (PtdEtn) from phosphatidylserine (PtdSer). This Francisella tularensis subsp. mediasiatica (strain FSC147) protein is Phosphatidylserine decarboxylase proenzyme.